The primary structure comprises 1294 residues: Phosphoribosylformylglycinamidine synthase (1294 aa).

The segment at 303–325 is disordered; that stretch reads WPGAATGSGGEIRDEGATGRGSK. ATP is bound by residues 305-316, 384-386, and Ala676; these read GAATGSGGEIRD and TGY. Mg(2+) contacts are provided by Asp677, Glu716, Asn720, and Asp883. Ser885 is a binding site for ATP. One can recognise a Glutamine amidotransferase type-1 domain in the interval 1041–1294; sequence VAVLREQGVN…MFRNARRQLG (254 aa). Catalysis depends on Cys1134, which acts as the Nucleophile. Catalysis depends on residues His1259 and Glu1261.

It in the N-terminal section; belongs to the FGAMS family. Monomer.

It localises to the cytoplasm. The enzyme catalyses N(2)-formyl-N(1)-(5-phospho-beta-D-ribosyl)glycinamide + L-glutamine + ATP + H2O = 2-formamido-N(1)-(5-O-phospho-beta-D-ribosyl)acetamidine + L-glutamate + ADP + phosphate + H(+). It participates in purine metabolism; IMP biosynthesis via de novo pathway; 5-amino-1-(5-phospho-D-ribosyl)imidazole from N(2)-formyl-N(1)-(5-phospho-D-ribosyl)glycinamide: step 1/2. In terms of biological role, phosphoribosylformylglycinamidine synthase involved in the purines biosynthetic pathway. Catalyzes the ATP-dependent conversion of formylglycinamide ribonucleotide (FGAR) and glutamine to yield formylglycinamidine ribonucleotide (FGAM) and glutamate. The protein is Phosphoribosylformylglycinamidine synthase of Pectobacterium atrosepticum (strain SCRI 1043 / ATCC BAA-672) (Erwinia carotovora subsp. atroseptica).